A 650-amino-acid polypeptide reads, in one-letter code: Tudor domain-containing protein 3 (650 aa).

The tract at residues 147 to 169 (TKTFGGGGNAGSNLNPGAGGSRN) is disordered. One can recognise a UBA domain in the interval 192–232 (LVDEKALRHITEMGFCKDAARQALMDHSNNVEAALNFLLTG). Disordered stretches follow at residues 233 to 271 (SKPK…APST), 286 to 406 (EDNK…SCNN), and 427 to 447 (HQNS…DQRY). Composition is skewed to basic and acidic residues over residues 320–337 (TRND…RFQK) and 366–388 (HWME…KDFS). The segment covering 390 to 406 (PPSNHQNEGSYRKSCNN) has biased composition (polar residues). One can recognise a Tudor domain in the interval 554–614 (SWRSGDECLA…RPIQAEAWEE (61 aa)). The interval 616–650 (GEFGDSLDFRRGGDGQPRRSTRPTQQFYQPPRARN) is disordered. Residues 622-632 (LDFRRGGDGQP) show a composition bias toward basic and acidic residues.

Component of mRNA stress granules.

It is found in the cytoplasm. The protein resides in the nucleus. In terms of biological role, scaffolding protein that specifically recognizes and binds dimethylarginine-containing proteins. Plays a role in the regulation of translation of target mRNAs by binding Arg/Gly-rich motifs (GAR) in dimethylarginine-containing proteins. In nucleus, acts as a coactivator: recognizes and binds asymmetric dimethylation on the core histone tails associated with transcriptional activation (H3R17me2a and H4R3me2a) and recruits proteins at these arginine-methylated loci. In cytoplasm, acts as an antiviral factor that participates in the assembly of stress granules together with G3BP1. The chain is Tudor domain-containing protein 3 (tdrd3) from Xenopus laevis (African clawed frog).